The chain runs to 61 residues: Photosystem II reaction center protein K (61 aa).

Residues 1 to 24 (MLNILSFIGICLNSFLYSSSFFVA) constitute a propeptide that is removed on maturation. A helical membrane pass occupies residues 40–60 (MPVIPLFFFLLAFVWQAAVSF).

Belongs to the PsbK family. In terms of assembly, PSII is composed of 1 copy each of membrane proteins PsbA, PsbB, PsbC, PsbD, PsbE, PsbF, PsbH, PsbI, PsbJ, PsbK, PsbL, PsbM, PsbT, PsbX, PsbY, PsbZ, Psb30/Ycf12, at least 3 peripheral proteins of the oxygen-evolving complex and a large number of cofactors. It forms dimeric complexes.

It localises to the plastid. Its subcellular location is the chloroplast thylakoid membrane. Functionally, one of the components of the core complex of photosystem II (PSII). PSII is a light-driven water:plastoquinone oxidoreductase that uses light energy to abstract electrons from H(2)O, generating O(2) and a proton gradient subsequently used for ATP formation. It consists of a core antenna complex that captures photons, and an electron transfer chain that converts photonic excitation into a charge separation. This is Photosystem II reaction center protein K from Cucumis sativus (Cucumber).